The primary structure comprises 219 residues: Phosphate-specific transport system accessory protein PhoU homolog 1 (219 aa).

It belongs to the PhoU family. As to quaternary structure, homodimer.

The protein resides in the cytoplasm. Plays a role in the regulation of phosphate uptake. This Methanothermobacter thermautotrophicus (strain ATCC 29096 / DSM 1053 / JCM 10044 / NBRC 100330 / Delta H) (Methanobacterium thermoautotrophicum) protein is Phosphate-specific transport system accessory protein PhoU homolog 1.